Reading from the N-terminus, the 308-residue chain is Transaldolase (308 aa).

Residue K125 is the Schiff-base intermediate with substrate of the active site.

Belongs to the transaldolase family. Type 1 subfamily. Homodimer.

The protein localises to the cytoplasm. It catalyses the reaction D-sedoheptulose 7-phosphate + D-glyceraldehyde 3-phosphate = D-erythrose 4-phosphate + beta-D-fructose 6-phosphate. It functions in the pathway carbohydrate degradation; pentose phosphate pathway; D-glyceraldehyde 3-phosphate and beta-D-fructose 6-phosphate from D-ribose 5-phosphate and D-xylulose 5-phosphate (non-oxidative stage): step 2/3. In terms of biological role, transaldolase is important for the balance of metabolites in the pentose-phosphate pathway. The protein is Transaldolase of Pseudomonas savastanoi pv. phaseolicola (strain 1448A / Race 6) (Pseudomonas syringae pv. phaseolicola (strain 1448A / Race 6)).